We begin with the raw amino-acid sequence, 392 residues long: Formate-dependent phosphoribosylglycinamide formyltransferase (392 aa).

N(1)-(5-phospho-beta-D-ribosyl)glycinamide contacts are provided by residues 22–23 (EL) and E82. Residues R114, K155, 160-165 (SSGKGQ), 195-198 (EKII), and E203 each bind ATP. The region spanning 119–308 (VLVSKKLNIL…EFALHVRSFL (190 aa)) is the ATP-grasp domain. Mg(2+) contacts are provided by E267 and E279. N(1)-(5-phospho-beta-D-ribosyl)glycinamide is bound by residues D286, K355, and 362-363 (RR).

The protein belongs to the PurK/PurT family. In terms of assembly, homodimer.

It catalyses the reaction N(1)-(5-phospho-beta-D-ribosyl)glycinamide + formate + ATP = N(2)-formyl-N(1)-(5-phospho-beta-D-ribosyl)glycinamide + ADP + phosphate + H(+). It participates in purine metabolism; IMP biosynthesis via de novo pathway; N(2)-formyl-N(1)-(5-phospho-D-ribosyl)glycinamide from N(1)-(5-phospho-D-ribosyl)glycinamide (formate route): step 1/1. Involved in the de novo purine biosynthesis. Catalyzes the transfer of formate to 5-phospho-ribosyl-glycinamide (GAR), producing 5-phospho-ribosyl-N-formylglycinamide (FGAR). Formate is provided by PurU via hydrolysis of 10-formyl-tetrahydrofolate. This chain is Formate-dependent phosphoribosylglycinamide formyltransferase, found in Wigglesworthia glossinidia brevipalpis.